The following is a 370-amino-acid chain: MNNSIITDDEVREFYLNCSSQTIIESLLSLHESLRLYSQNHEILLNRMFKKLDETNADSNISHIFMPVVSKDFSGIKILVNNNNKNFQGVINVIEPETGKLIGCFEAKQITAIRTALASCIGLYKQLSCSHDKLFRFENGTCYLTCFGTGLQAFWHIYIAIKLIMSGIVGESLKLVEINILYHNNMMSLDRLKSLKNLFGSNIKIELNQYQINDISSEGNGAVSNSDIIFGCLPTLEPNLFLRQLLNSKASVEQKHTYISLIGSYKPVMHECDKELIDKFKSDNESACILVDSREHTLLESGELIDSNIAPHNLIEIGELDTLKNTVLNLNEKGCKRTITLCKIVGLAVMDVALAKEFLSLRTKNTENKE.

At methionine 1 the chain carries N-acetylmethionine.

The protein belongs to the ornithine cyclodeaminase/mu-crystallin family.

This is an uncharacterized protein from Saccharomyces cerevisiae (strain ATCC 204508 / S288c) (Baker's yeast).